The following is a 290-amino-acid chain: MANPKLLGMGLSEAEAIGADSARFEELLLQASKELQQAQTTRPESTQIQPQPGFCIKTNSSEGKVFINICHSPSIPPPADVTEEELLQMLEEDQAGFRIPMSLGEPHAELDAKGQGCTAYDVAVNSDFYRRMQNSDFLRELVITIAREGLEDKYNLQLNPEWRMMKNRPFMGSISQQNIRSEQRPRIQELGDLYTPAPGRAESGPEKPHLNLWLEAPDLLLAEVDLPKLDGALGLSLEIGENRLVMGGPQQLYHLDAYIPLQINSHESKAAFHRKRKQLMVAMPLLPVPS.

Residues Ser-12 and Ser-173 each carry the phosphoserine modification.

The protein belongs to the PIH1 family. As to quaternary structure, component of the R2TP complex composed at least of RUVBL1, RUVBL2, RPAP3 and PIHD1. Component of the PAQosome complex which is responsible for the biogenesis of several protein complexes and which consists of R2TP complex members RUVBL1, RUVBL2, RPAP3 and PIH1D1, URI complex members PFDN2, PFDN6, PDRG1, UXT and URI1 as well as ASDURF, POLR2E and DNAAF10/WDR92. Interacts with phosphorylated TELO2 and mediates interaction of TELO2 with the R2TP complex. Interacts with phosphorylated ECD, EFTUD2/SNRP116, RPB1 and UBR5 and with RPB1 in a phosphorylation-independent manner. Interacts with the core C/D box snoRNP particle components NOP58 and FBL and with RUVBL1/TIP49. Interacts with RPAP3 and DNAAF10. Interacts with histone H4 and with SWI/SNF complex member SMARCB1/SNF5. Interacts with the mTORC1 complex member RPTOR. Interacts with MSL1. Expressed at low levels in normal mammary epithelial cells (at protein level). Highest expression in lung, leukocyte and placenta. Expressed at lower levels in brain, prostate, colon, heart, small intestine, liver, ovary, pancreas, skeletal muscle, spleen, testis and thymus.

The protein resides in the nucleus. Its function is as follows. Involved in the assembly of C/D box small nucleolar ribonucleoprotein (snoRNP) particles. Recruits the SWI/SNF complex to the core promoter of rRNA genes and enhances pre-rRNA transcription. Mediates interaction of TELO2 with the R2TP complex which is necessary for the stability of MTOR and SMG1. Positively regulates the assembly and activity of the mTORC1 complex. This Homo sapiens (Human) protein is PIH1 domain-containing protein 1 (PIH1D1).